A 369-amino-acid chain; its full sequence is Homoserine O-succinyltransferase (369 aa).

The important for substrate specificity stretch occupies residues 90-93 (GISA). In terms of domain architecture, AB hydrolase-1 spans 107–353 (WWSGAVGVRA…YGHDAFLKED (247 aa)). Catalysis depends on Ser175, which acts as the Nucleophile. Arg236 contributes to the substrate binding site. Catalysis depends on residues Asp316 and His346. Residue Asp347 coordinates substrate.

This sequence belongs to the AB hydrolase superfamily. MetX family. As to quaternary structure, homodimer.

The protein resides in the cytoplasm. The enzyme catalyses L-homoserine + succinyl-CoA = O-succinyl-L-homoserine + CoA. The protein operates within amino-acid biosynthesis; L-methionine biosynthesis via de novo pathway; O-succinyl-L-homoserine from L-homoserine: step 1/1. Its function is as follows. Transfers a succinyl group from succinyl-CoA to L-homoserine, forming succinyl-L-homoserine. In Brevundimonas diminuta (strain ATCC 11568 / DSM 7234 / NBRC 12697 / NCIMB 9393 / NCTC 8545), this protein is Homoserine O-succinyltransferase.